Here is a 392-residue protein sequence, read N- to C-terminus: Chaperone protein DnaJ 1 (392 aa).

Positions 4–67 (DYYEILGVSH…QKRAVFDRGG (64 aa)) constitute a J domain. The CR-type zinc finger occupies 134 to 216 (GVTKSLEVDT…CSGEGRVRTT (83 aa)). Positions 147, 150, 164, 167, 190, 193, 204, and 207 each coordinate Zn(2+). 4 CXXCXGXG motif repeats span residues 147–154 (CPKCQGKG), 164–171 (CDTCQGRG), 190–197 (CPTCHGYG), and 204–211 (CQECSGEG). Positions 367–392 (ETNASASVEKSGGRGMFSRIKEAFGG) are disordered.

It belongs to the DnaJ family. Homodimer. Zn(2+) is required as a cofactor.

It localises to the cytoplasm. In terms of biological role, participates actively in the response to hyperosmotic and heat shock by preventing the aggregation of stress-denatured proteins and by disaggregating proteins, also in an autonomous, DnaK-independent fashion. Unfolded proteins bind initially to DnaJ; upon interaction with the DnaJ-bound protein, DnaK hydrolyzes its bound ATP, resulting in the formation of a stable complex. GrpE releases ADP from DnaK; ATP binding to DnaK triggers the release of the substrate protein, thus completing the reaction cycle. Several rounds of ATP-dependent interactions between DnaJ, DnaK and GrpE are required for fully efficient folding. Also involved, together with DnaK and GrpE, in the DNA replication of plasmids through activation of initiation proteins. This is Chaperone protein DnaJ 1 from Cutibacterium acnes (strain DSM 16379 / KPA171202) (Propionibacterium acnes).